We begin with the raw amino-acid sequence, 47 residues long: Large ribosomal subunit protein bL34 (47 aa).

Belongs to the bacterial ribosomal protein bL34 family.

This Mycobacterium avium (strain 104) protein is Large ribosomal subunit protein bL34.